The sequence spans 450 residues: Bifunctional protein GlmU (450 aa).

The segment at 1–221 (MRCIVLAAGM…SCEFIGINNR (221 aa)) is pyrophosphorylase. Residues 6–9 (LAAG), Lys-20, Gln-69, 74–75 (GT), 96–98 (YGD), Gly-135, Glu-150, Asn-165, and Asn-219 contribute to the UDP-N-acetyl-alpha-D-glucosamine site. Residue Asp-98 participates in Mg(2+) binding. Asn-219 contacts Mg(2+). The linker stretch occupies residues 222–242 (IQLAQAEKFRRQWILEELMIK). The tract at residues 243-450 (GVTIVDPETT…VIDKRKKEED (208 aa)) is N-acetyltransferase. UDP-N-acetyl-alpha-D-glucosamine is bound by residues Arg-324 and Lys-342. Catalysis depends on His-354, which acts as the Proton acceptor. UDP-N-acetyl-alpha-D-glucosamine is bound by residues Tyr-357 and Asn-368. 4 residues coordinate acetyl-CoA: Ala-371, Ser-396, Ala-414, and Arg-431.

In the N-terminal section; belongs to the N-acetylglucosamine-1-phosphate uridyltransferase family. This sequence in the C-terminal section; belongs to the transferase hexapeptide repeat family. In terms of assembly, homotrimer. Requires Mg(2+) as cofactor.

It is found in the cytoplasm. It catalyses the reaction alpha-D-glucosamine 1-phosphate + acetyl-CoA = N-acetyl-alpha-D-glucosamine 1-phosphate + CoA + H(+). The catalysed reaction is N-acetyl-alpha-D-glucosamine 1-phosphate + UTP + H(+) = UDP-N-acetyl-alpha-D-glucosamine + diphosphate. It functions in the pathway nucleotide-sugar biosynthesis; UDP-N-acetyl-alpha-D-glucosamine biosynthesis; N-acetyl-alpha-D-glucosamine 1-phosphate from alpha-D-glucosamine 6-phosphate (route II): step 2/2. It participates in nucleotide-sugar biosynthesis; UDP-N-acetyl-alpha-D-glucosamine biosynthesis; UDP-N-acetyl-alpha-D-glucosamine from N-acetyl-alpha-D-glucosamine 1-phosphate: step 1/1. Its pathway is bacterial outer membrane biogenesis; LPS lipid A biosynthesis. Its function is as follows. Catalyzes the last two sequential reactions in the de novo biosynthetic pathway for UDP-N-acetylglucosamine (UDP-GlcNAc). The C-terminal domain catalyzes the transfer of acetyl group from acetyl coenzyme A to glucosamine-1-phosphate (GlcN-1-P) to produce N-acetylglucosamine-1-phosphate (GlcNAc-1-P), which is converted into UDP-GlcNAc by the transfer of uridine 5-monophosphate (from uridine 5-triphosphate), a reaction catalyzed by the N-terminal domain. This chain is Bifunctional protein GlmU, found in Pseudothermotoga lettingae (strain ATCC BAA-301 / DSM 14385 / NBRC 107922 / TMO) (Thermotoga lettingae).